Reading from the N-terminus, the 307-residue chain is UDP-N-acetylenolpyruvoylglucosamine reductase (307 aa).

Residues 34-198 enclose the FAD-binding PCMH-type domain; the sequence is LGGKADVYIT…LEATFALKKA (165 aa). Arg-177 is an active-site residue. Ser-227 acts as the Proton donor in catalysis. The active site involves Glu-297.

This sequence belongs to the MurB family. FAD is required as a cofactor.

It localises to the cytoplasm. It catalyses the reaction UDP-N-acetyl-alpha-D-muramate + NADP(+) = UDP-N-acetyl-3-O-(1-carboxyvinyl)-alpha-D-glucosamine + NADPH + H(+). It functions in the pathway cell wall biogenesis; peptidoglycan biosynthesis. In terms of biological role, cell wall formation. This Oceanobacillus iheyensis (strain DSM 14371 / CIP 107618 / JCM 11309 / KCTC 3954 / HTE831) protein is UDP-N-acetylenolpyruvoylglucosamine reductase.